Consider the following 135-residue polypeptide: Peptide methionine sulfoxide reductase MsrB (135 aa).

The MsrB domain occupies 13 to 135; that stretch reads DADWREQLTP…NGHSMVFEPV (123 aa). The Zn(2+) site is built by Cys52, Cys55, Cys101, and Cys104. Cys124 acts as the Nucleophile in catalysis.

It belongs to the MsrB Met sulfoxide reductase family. Zn(2+) is required as a cofactor.

The enzyme catalyses L-methionyl-[protein] + [thioredoxin]-disulfide + H2O = L-methionyl-(R)-S-oxide-[protein] + [thioredoxin]-dithiol. This Agrobacterium fabrum (strain C58 / ATCC 33970) (Agrobacterium tumefaciens (strain C58)) protein is Peptide methionine sulfoxide reductase MsrB.